Here is a 641-residue protein sequence, read N- to C-terminus: Choline O-acetyltransferase (641 aa).

The tract at residues 1–29 (MPILEKTPPKMAAKSPSSEEEPGLPKLPV) is disordered. Phosphoserine is present on serine 17. Histidine 335 acts as the Proton acceptor in catalysis. Serine 366 is subject to Phosphoserine. CoA contacts are provided by residues 413–425 (GKTF…CSPD), serine 451, and glutamine 552. Residues 619-641 (QSGMGKPLATKEKVTRPSQVHQP) form a disordered region.

The protein belongs to the carnitine/choline acetyltransferase family.

The enzyme catalyses choline + acetyl-CoA = acetylcholine + CoA. In terms of biological role, catalyzes the reversible synthesis of acetylcholine (ACh) from acetyl CoA and choline at cholinergic synapses. The chain is Choline O-acetyltransferase (CHAT) from Sus scrofa (Pig).